The following is a 169-amino-acid chain: Peptidyl-prolyl cis-trans isomerase (169 aa).

In terms of domain architecture, PPIase cyclophilin-type spans 5-168; it reads FFDMTIGGQP…SEVKIAKCGQ (164 aa).

This sequence belongs to the cyclophilin-type PPIase family.

The protein resides in the cytoplasm. The catalysed reaction is [protein]-peptidylproline (omega=180) = [protein]-peptidylproline (omega=0). Binds cyclosporin A (CsA). CsA mediates some of its effects via an inhibitory action on PPIase. In terms of biological role, PPIases accelerate the folding of proteins. It catalyzes the cis-trans isomerization of proline imidic peptide bonds in oligopeptides. This chain is Peptidyl-prolyl cis-trans isomerase, found in Unspecified eudicot DB-1992.